The following is a 133-amino-acid chain: Small ribosomal subunit protein uS8 (133 aa).

This sequence belongs to the universal ribosomal protein uS8 family. As to quaternary structure, part of the 30S ribosomal subunit. Contacts proteins S5 and S12.

In terms of biological role, one of the primary rRNA binding proteins, it binds directly to 16S rRNA central domain where it helps coordinate assembly of the platform of the 30S subunit. The sequence is that of Small ribosomal subunit protein uS8 from Prochlorococcus marinus subsp. pastoris (strain CCMP1986 / NIES-2087 / MED4).